The following is a 318-amino-acid chain: NADH-ubiquinone oxidoreductase chain 1 (318 aa).

A run of 8 helical transmembrane segments spans residues 2–22, 70–90, 98–118, 140–160, 173–193, 217–237, 253–273, and 294–314; these read FTIN…FLTL, LYMA…TPLP, FNLG…SILW, ISYG…SGSF, WLLL…LAET, AGSF…MNAL, ELYT…FLWI, and LPLT…LSGI.

The protein belongs to the complex I subunit 1 family.

The protein resides in the mitochondrion inner membrane. The catalysed reaction is a ubiquinone + NADH + 5 H(+)(in) = a ubiquinol + NAD(+) + 4 H(+)(out). Functionally, core subunit of the mitochondrial membrane respiratory chain NADH dehydrogenase (Complex I) that is believed to belong to the minimal assembly required for catalysis. Complex I functions in the transfer of electrons from NADH to the respiratory chain. The immediate electron acceptor for the enzyme is believed to be ubiquinone. The sequence is that of NADH-ubiquinone oxidoreductase chain 1 (MT-ND1) from Sapajus apella (Brown-capped capuchin).